Here is a 405-residue protein sequence, read N- to C-terminus: MNVYLVGGAVRNRLLKLPVTERDWVVVGATPEEMLLLGYKKVGKNFPVFLHPETKEEYALARTERKMAEGHTGFACYASPDVTLEEDLLRRDLTINAIACNDKGDLIDPYQGEKDLNQLILRHVSEAFIEDPLRVLRVARFAAQFAHLGFSIDSVTLDLMTKISQSGELLTLSPERVWKETEKALLSPSPHIYFQVLKHCSAILVLFPEIDTLCSPLRCPLSHGLSTLSIAAKLTDQKEVRFAALCHILGKKLTEYDVLGTHDRAVLKRVPLCDLNKIEQLCERLKLPNLFRELLKHTLKYRGLVTIINRLSFPLLLNFFDELDLWRKPYRLEQLILISKADESTEGGVEGKHDYQAQYVREAFNIARAVSVKKILEGGFRKEAIQKELTRRRNQALDQWQKQKT.

Residues Gly-8 and Arg-11 each contribute to the ATP site. CTP-binding residues include Gly-8 and Arg-11. Positions 21 and 23 each coordinate Mg(2+). 3 residues coordinate ATP: Arg-91, Arg-137, and Arg-140. CTP-binding residues include Arg-91, Arg-137, and Arg-140. In terms of domain architecture, HD spans 220–326; sequence PLSHGLSTLS…LNFFDELDLW (107 aa).

The protein belongs to the tRNA nucleotidyltransferase/poly(A) polymerase family. Bacterial CCA-adding enzyme type 2 subfamily. Requires Mg(2+) as cofactor.

The catalysed reaction is a tRNA precursor + 2 CTP + ATP = a tRNA with a 3' CCA end + 3 diphosphate. It carries out the reaction a tRNA with a 3' CCA end + 2 CTP + ATP = a tRNA with a 3' CCACCA end + 3 diphosphate. Functionally, catalyzes the addition and repair of the essential 3'-terminal CCA sequence in tRNAs without using a nucleic acid template. Adds these three nucleotides in the order of C, C, and A to the tRNA nucleotide-73, using CTP and ATP as substrates and producing inorganic pyrophosphate. tRNA 3'-terminal CCA addition is required both for tRNA processing and repair. Also involved in tRNA surveillance by mediating tandem CCA addition to generate a CCACCA at the 3' terminus of unstable tRNAs. While stable tRNAs receive only 3'-terminal CCA, unstable tRNAs are marked with CCACCA and rapidly degraded. This is CCA-adding enzyme from Hamiltonella defensa subsp. Acyrthosiphon pisum (strain 5AT).